We begin with the raw amino-acid sequence, 290 residues long: Enoyl-CoA hydratase, mitochondrial (290 aa).

A mitochondrion-targeting transit peptide spans 1–27 (MAALRVLLSCVRGPLRPPVRCPAWRPF). Phosphothreonine is present on threonine 46. 98 to 101 (ADIK) contacts substrate. N6-acetyllysine; alternate is present on lysine 101. At lysine 101 the chain carries N6-succinyllysine; alternate. Serine 114 carries the phosphoserine modification. The residue at position 115 (lysine 115) is an N6-acetyllysine; alternate. The residue at position 115 (lysine 115) is an N6-succinyllysine; alternate. Lysine 118 carries the post-translational modification N6-acetyllysine. Substrate is bound at residue glycine 141. Lysine 204 carries the N6-succinyllysine modification. N6-acetyllysine is present on lysine 211.

Belongs to the enoyl-CoA hydratase/isomerase family. Homohexamer; dimer of trimers. As to expression, liver, fibroblast, muscle. Barely detectable in spleen and kidney.

The protein resides in the mitochondrion matrix. It catalyses the reaction a (3S)-3-hydroxyacyl-CoA = a (2E)-enoyl-CoA + H2O. The catalysed reaction is a (3E)-enoyl-CoA = a 4-saturated (2E)-enoyl-CoA. The enzyme catalyses (3E)-hexenoyl-CoA = (2E)-hexenoyl-CoA. It carries out the reaction (3S)-3-hydroxybutanoyl-CoA = (2E)-butenoyl-CoA + H2O. It catalyses the reaction 3-hydroxyisovaleryl-CoA = 3-methylbut-2-enoyl-CoA + H2O. The catalysed reaction is 3-hydroxypropanoyl-CoA = acryloyl-CoA + H2O. The enzyme catalyses 3-hydroxybutanoyl-CoA = (2E)-butenoyl-CoA + H2O. It carries out the reaction 2-methylpropenoyl-CoA + H2O = (S)-3-hydroxyisobutanoyl-CoA. It catalyses the reaction (3S)-hydroxyhexanoyl-CoA = (2E)-hexenoyl-CoA + H2O. The catalysed reaction is (3S)-hydroxydecanoyl-CoA = (2E)-decenoyl-CoA + H2O. It participates in lipid metabolism; fatty acid beta-oxidation. Its function is as follows. Converts unsaturated trans-2-enoyl-CoA species ((2E)-enoyl-CoA) to the corresponding (3S)-3hydroxyacyl-CoA species through addition of a water molecule to the double bond. Catalyzes the hydration of medium- and short-chained fatty enoyl-CoA thioesters from 4 carbons long (C4) up to C16. Has high substrate specificity for crotonyl-CoA ((2E)-butenoyl-CoA) and moderate specificity for acryloyl-CoA, 3-methylcrotonyl-CoA (3-methyl-(2E)-butenoyl-CoA) and methacrylyl-CoA ((2E)-2-methylpropenoyl-CoA). Can bind tiglyl-CoA (2-methylcrotonoyl-CoA), but hydrates only a small amount of this substrate. Plays a key role in the beta-oxidation spiral of short- and medium-chain fatty acid oxidation. At a lower rate than the hydratase reaction, catalyzes the isomerase reaction of trans-3-enoyl-CoA species (such as (3E)-hexenoyl-CoA) to trans-2-enoyl-CoA species (such as (2E)-hexenoyl-CoA), which are subsequently hydrated to 3(S)-3-hydroxyacyl-CoA species (such as (3S)-hydroxyhexanoyl-CoA). The chain is Enoyl-CoA hydratase, mitochondrial from Homo sapiens (Human).